The primary structure comprises 399 residues: Elongation factor Tu (399 aa).

In terms of domain architecture, tr-type G spans 10–209 (KPHVNIGTIG…AVDSYIPTPK (200 aa)). The interval 19-26 (GHVDHGKT) is G1. 19 to 26 (GHVDHGKT) contacts GTP. Thr-26 contacts Mg(2+). The G2 stretch occupies residues 60 to 64 (GITIA). Residues 81–84 (DCPG) form a G3 region. GTP is bound by residues 81 to 85 (DCPGH) and 136 to 139 (NKTD). The tract at residues 136-139 (NKTD) is G4. The G5 stretch occupies residues 174-176 (SAL).

It belongs to the TRAFAC class translation factor GTPase superfamily. Classic translation factor GTPase family. EF-Tu/EF-1A subfamily. Monomer.

It is found in the cytoplasm. It carries out the reaction GTP + H2O = GDP + phosphate + H(+). Its function is as follows. GTP hydrolase that promotes the GTP-dependent binding of aminoacyl-tRNA to the A-site of ribosomes during protein biosynthesis. This chain is Elongation factor Tu, found in Campylobacter hominis (strain ATCC BAA-381 / DSM 21671 / CCUG 45161 / LMG 19568 / NCTC 13146 / CH001A).